Here is a 610-residue protein sequence, read N- to C-terminus: Protein Smaug homolog 1 (610 aa).

The residue at position 67 (Ser-67) is a Phosphoserine. Disordered regions lie at residues 177 to 222 (ARGP…EEGS), 318 to 366 (SSPS…LQPP), and 464 to 487 (NRGFGQSNSLPTASSVGSGMGRRN). Residues 222–295 (SGMKDVPAWL…LKSLERDIIE (74 aa)) enclose the SAM domain. At Ser-319 the chain carries Phosphoserine. A Phosphothreonine modification is found at Thr-323. Positions 344-358 (SAATVTSATASASAG) are enriched in low complexity. Position 465 is an omega-N-methylarginine (Arg-465). Residues 467 to 480 (FGQSNSLPTASSVG) show a composition bias toward polar residues. Ser-472 carries the post-translational modification Phosphoserine.

It belongs to the SMAUG family. Expressed in brain (at protein level).

Its subcellular location is the cytoplasm. It localises to the cell projection. The protein resides in the dendrite. The protein localises to the synapse. It is found in the synaptosome. Functionally, acts as a translational repressor of SRE-containing messengers. The sequence is that of Protein Smaug homolog 1 (Samd4a) from Rattus norvegicus (Rat).